The following is an 831-amino-acid chain: Translation initiation factor IF-2 (831 aa).

The 171-residue stretch at threonine 329–lysine 499 folds into the tr-type G domain. Residues glycine 338–threonine 345 form a G1 region. Glycine 338–threonine 345 is a binding site for GTP. Residues glycine 363–histidine 367 form a G2 region. The tract at residues aspartate 385–glycine 388 is G3. Residues aspartate 385 to histidine 389 and asparagine 439 to aspartate 442 contribute to the GTP site. Residues asparagine 439–aspartate 442 are G4. Residues serine 475 to leucine 477 are G5.

This sequence belongs to the TRAFAC class translation factor GTPase superfamily. Classic translation factor GTPase family. IF-2 subfamily.

The protein localises to the cytoplasm. Functionally, one of the essential components for the initiation of protein synthesis. Protects formylmethionyl-tRNA from spontaneous hydrolysis and promotes its binding to the 30S ribosomal subunits. Also involved in the hydrolysis of GTP during the formation of the 70S ribosomal complex. This is Translation initiation factor IF-2 (infB) from Rickettsia prowazekii (strain Madrid E).